The chain runs to 64 residues: Large ribosomal subunit protein bL28 (64 aa).

Positions Met1–Asn23 are disordered.

This sequence belongs to the bacterial ribosomal protein bL28 family.

The sequence is that of Large ribosomal subunit protein bL28 from Mesomycoplasma hyopneumoniae (strain 232) (Mycoplasma hyopneumoniae).